The sequence spans 281 residues: Large ribosomal subunit protein uL2 (281 aa).

The interval 222–281 (TVRGSVMNPNDHPHGGGEGRTPIGRKSPVTPWGKKALGVKTRNTKKPSEKLIVRKRNAKK) is disordered.

The protein belongs to the universal ribosomal protein uL2 family. Part of the 50S ribosomal subunit. Forms a bridge to the 30S subunit in the 70S ribosome.

In terms of biological role, one of the primary rRNA binding proteins. Required for association of the 30S and 50S subunits to form the 70S ribosome, for tRNA binding and peptide bond formation. It has been suggested to have peptidyltransferase activity; this is somewhat controversial. Makes several contacts with the 16S rRNA in the 70S ribosome. This is Large ribosomal subunit protein uL2 from Mesoplasma florum (strain ATCC 33453 / NBRC 100688 / NCTC 11704 / L1) (Acholeplasma florum).